The primary structure comprises 109 residues: Thiosulfate sulfurtransferase GlpE (109 aa).

The region spanning 17 to 105 (HQQTAVLVDI…WHRHFPAEVA (89 aa)) is the Rhodanese domain. Cys-65 functions as the Cysteine persulfide intermediate in the catalytic mechanism.

Belongs to the GlpE family.

Its subcellular location is the cytoplasm. The catalysed reaction is thiosulfate + hydrogen cyanide = thiocyanate + sulfite + 2 H(+). It carries out the reaction thiosulfate + [thioredoxin]-dithiol = [thioredoxin]-disulfide + hydrogen sulfide + sulfite + 2 H(+). Transferase that catalyzes the transfer of sulfur from thiosulfate to thiophilic acceptors such as cyanide or dithiols. May function in a CysM-independent thiosulfate assimilation pathway by catalyzing the conversion of thiosulfate to sulfite, which can then be used for L-cysteine biosynthesis. In Klebsiella pneumoniae subsp. pneumoniae (strain ATCC 700721 / MGH 78578), this protein is Thiosulfate sulfurtransferase GlpE.